A 205-amino-acid polypeptide reads, in one-letter code: Methylamine utilization protein MauD (205 aa).

A helical membrane pass occupies residues 5–25 (FLIASNVLLWLALIGCAVLML). In terms of domain architecture, Thioredoxin spans 50-184 (PDVGDAAPTF…LESLLEADKS (135 aa)).

The protein localises to the membrane. It functions in the pathway one-carbon metabolism; methylamine degradation. May be specifically involved in the processing, transport, and/or maturation of the MADH beta-subunit. This Methylorubrum extorquens (strain ATCC 14718 / DSM 1338 / JCM 2805 / NCIMB 9133 / AM1) (Methylobacterium extorquens) protein is Methylamine utilization protein MauD (mauD).